Here is a 429-residue protein sequence, read N- to C-terminus: Ribosomal RNA small subunit methyltransferase B (429 aa).

S-adenosyl-L-methionine-binding positions include 254–260, Asp-277, Asp-303, and Asp-322; that span reads CAAPGGK. Residue Cys-375 is the Nucleophile of the active site.

The protein belongs to the class I-like SAM-binding methyltransferase superfamily. RsmB/NOP family.

The protein localises to the cytoplasm. It carries out the reaction cytidine(967) in 16S rRNA + S-adenosyl-L-methionine = 5-methylcytidine(967) in 16S rRNA + S-adenosyl-L-homocysteine + H(+). Functionally, specifically methylates the cytosine at position 967 (m5C967) of 16S rRNA. This is Ribosomal RNA small subunit methyltransferase B from Shigella sonnei (strain Ss046).